A 138-amino-acid polypeptide reads, in one-letter code: Phosphoribosyl-AMP cyclohydrolase (138 aa).

Residue Asp84 participates in Mg(2+) binding. A Zn(2+)-binding site is contributed by Cys85. 2 residues coordinate Mg(2+): Asp86 and Asp88. Residues Cys102 and Cys109 each contribute to the Zn(2+) site.

It belongs to the PRA-CH family. Homodimer. The cofactor is Mg(2+). Requires Zn(2+) as cofactor.

The protein resides in the cytoplasm. It catalyses the reaction 1-(5-phospho-beta-D-ribosyl)-5'-AMP + H2O = 1-(5-phospho-beta-D-ribosyl)-5-[(5-phospho-beta-D-ribosylamino)methylideneamino]imidazole-4-carboxamide. Its pathway is amino-acid biosynthesis; L-histidine biosynthesis; L-histidine from 5-phospho-alpha-D-ribose 1-diphosphate: step 3/9. Catalyzes the hydrolysis of the adenine ring of phosphoribosyl-AMP. This chain is Phosphoribosyl-AMP cyclohydrolase, found in Burkholderia orbicola (strain MC0-3).